A 359-amino-acid chain; its full sequence is N-acetylneuraminate-9-phosphate synthase (359 aa).

N6-acetyllysine is present on residues K61, K74, and K79. S275 is modified (phosphoserine). K290 is subject to N6-acetyllysine. An AFP-like domain is found at 294–353 (SVVAKVKIPAGTTLTLDMLTVKVGEPKGYPPEDIFNLAGKKVLVTIEEDDTVMEESVESH).

As to expression, ubiquitous.

Its subcellular location is the cytoplasm. It catalyses the reaction aldehydo-N-acetyl-D-mannosamine 6-phosphate + phosphoenolpyruvate + H2O = N-acetylneuraminate 9-phosphate + phosphate. In terms of biological role, catalyzes condensation of phosphoenolpyruvate (PEP) and N-acetylmannosamine 6-phosphate (ManNAc-6-P) to synthesize N-acetylneuraminate-9-phosphate (Neu5Ac-9-P). Neu5Ac-9-P is the phosphorylated forms of sialic acid N-acetylneuraminic acid (Neu5Ac). In contrast with human ortholog, has no detectable activity towards D-mannose 6-phosphate. This chain is N-acetylneuraminate-9-phosphate synthase, found in Mus musculus (Mouse).